The sequence spans 150 residues: Interferon antagonist OPG027 (150 aa).

It belongs to the orthopoxvirus OPG027 family.

In terms of biological role, inhibits antiviral activity induced by type I interferons. Does not block signal transduction of IFN, but is important to counteract the host antiviral state induced by a pre-treatment with IFN. This is Interferon antagonist OPG027 (OPG027) from Vaccinia virus (strain Ankara) (VACV).